The primary structure comprises 247 residues: 2,3-bisphosphoglycerate-dependent phosphoglycerate mutase (247 aa).

Residues 9–16, 22–23, Arg61, 88–91, Lys99, 115–116, and 183–184 contribute to the substrate site; these read RHGESEWN, TG, ERHY, RR, and GN. The active-site Tele-phosphohistidine intermediate is the His10. The Proton donor/acceptor role is filled by Glu88.

Belongs to the phosphoglycerate mutase family. BPG-dependent PGAM subfamily.

The catalysed reaction is (2R)-2-phosphoglycerate = (2R)-3-phosphoglycerate. The protein operates within carbohydrate degradation; glycolysis; pyruvate from D-glyceraldehyde 3-phosphate: step 3/5. Its function is as follows. Catalyzes the interconversion of 2-phosphoglycerate and 3-phosphoglycerate. This chain is 2,3-bisphosphoglycerate-dependent phosphoglycerate mutase, found in Nocardioides sp. (strain ATCC BAA-499 / JS614).